The primary structure comprises 323 residues: Flavone synthase cfoJ (323 aa).

FMN serves as cofactor.

It participates in secondary metabolite biosynthesis; flavonoid biosynthesis. Functionally, FMN-dependent oxidoreductase; part of the gene cluster that mediates the biosynthesis of chlorflavonin, a fungal flavonoid with acetolactate synthase inhibitory activity. Within the pathway, cfoJ acts as a flavone synthase (FNS) and catalyzes the formation of a double bond between C2 and C3, converting the flavanone into a flavone. The pathway begins with the PKS-NRPS hybrid synthetase cfoA that uses benzoic acid or p-hydroxybenzoic acid as a starter unit with four rounds of chain elongation using malonyl-CoA to form the chalcone skeleton. Then, a new type of chalcone isomerase, cfoK, catalyzes the conversion of the chalcone into a flavanone by a histidine-mediated oxa-Michael addition mechanism. The desaturation of flavanone to flavone is catalyzed by a new type of flavone synthase, the flavin mononucleotide (FMN)-dependent oxidoreductase cfoJ. Monooxygenases cfoF, cfoG, and P450 cfoH are responsible for the hydroxylation of the flavonoid skeleton at sites C3, C8, and C2', respectively. Like cfoF, the dehydratase cfoI plays also a role in the hydroxylation of position C3. Methyltransferases cfoB, cfoC, and cfoD then catalyze the methylation of C7-OH, C8-OH, and C3-OH, respectively. Finally, the monooxygenase cfoE is responsible for the chlorination of flavonoid at position C3'. The polypeptide is Flavone synthase cfoJ (Aspergillus candidus).